Here is a 1349-residue protein sequence, read N- to C-terminus: Spike glycoprotein (1349 aa).

Positions 1–13 (MFFILLITLPSVF) are cleaved as a signal peptide. Topologically, residues 14 to 1293 (AVIGDLKCNT…GTYEYYVKWP (1280 aa)) are extracellular. One can recognise a BetaCoV S1-NTD domain in the interval 15-298 (VIGDLKCNTS…DFMSEIMCKT (284 aa)). Disulfide bonds link cysteine 21-cysteine 165, cysteine 160-cysteine 193, cysteine 172-cysteine 252, cysteine 286-cysteine 296, cysteine 331-cysteine 356, cysteine 374-cysteine 427, and cysteine 386-cysteine 601. Asparagine 22, asparagine 59, and asparagine 133 each carry an N-linked (GlcNAc...) asparagine; by host glycan. A glycan (N-linked (GlcNAc...) asparagine; by host) is linked at asparagine 198. A BetaCoV S1-CTD domain is found at 329–603 (PNCDIEAWLN…DVNSGTTCST (275 aa)). Asparagine 437, asparagine 456, asparagine 512, asparagine 611, asparagine 635, asparagine 662, asparagine 682, asparagine 700, asparagine 725, asparagine 774, and asparagine 881 each carry an N-linked (GlcNAc...) asparagine; by host glycan. 2 fusion peptide regions span residues 900–921 (SAIE…VQAY) and 919–939 (QAYN…VQSY). N-linked (GlcNAc...) asparagine; by host glycosylation is present at asparagine 923. Residues cysteine 924 and cysteine 935 are joined by a disulfide bond. Residues 1000–1050 (QKLIASAFNNALDSIQEGFDATNSALVKIQAVVNANAEALNNLLQQLSNRF) form a heptad repeat 1 region. The stretch at 1029-1073 (QAVVNANAEALNNLLQQLSNRFGAISASLQEILSRLDALEAKAQI) forms a coiled coil. 6 N-linked (GlcNAc...) asparagine; by host glycosylation sites follow: asparagine 1180, asparagine 1210, asparagine 1220, asparagine 1239, asparagine 1253, and asparagine 1274. A heptad repeat 2 region spans residues 1244 to 1282 (APDLSFDYINVTFLDLQDEMNRLQEAIKVLNHSYINLKD). The stretch at 1255–1283 (TFLDLQDEMNRLQEAIKVLNHSYINLKDI) forms a coiled coil. Residues 1294-1314 (WYVWLLICLAGVVMLVLLFFI) traverse the membrane as a helical segment. Residues 1315–1349 (CCCTGCGTSCFKKCGGCFDDYTGHQEFVIKTSHDD) are Cytoplasmic-facing. Positions 1345–1349 (TSHDD) match the KxHxx motif.

This sequence belongs to the betacoronaviruses spike protein family. As to quaternary structure, homotrimer; each monomer consists of a S1 and a S2 subunit. The resulting peplomers protrude from the virus surface as spikes. Specific enzymatic cleavages in vivo yield mature proteins. The precursor is processed into S1 and S2 by host cell furin or another cellular protease to yield the mature S1 and S2 proteins. Additionally, a second cleavage leads to the release of a fusion peptide after viral attachment to host cell receptor. Post-translationally, the cytoplasmic Cys-rich domain is palmitoylated. Spike glycoprotein is digested within host endosomes.

Its subcellular location is the virion membrane. The protein resides in the host endoplasmic reticulum-Golgi intermediate compartment membrane. It is found in the host cell membrane. Attaches the virion to the cell membrane by interacting with host receptor, initiating the infection. Functionally, mediates fusion of the virion and cellular membranes by acting as a class I viral fusion protein. Under the current model, the protein has at least three conformational states: pre-fusion native state, pre-hairpin intermediate state, and post-fusion hairpin state. During viral and target cell membrane fusion, the coiled coil regions (heptad repeats) assume a trimer-of-hairpins structure, positioning the fusion peptide in close proximity to the C-terminal region of the ectodomain. The formation of this structure appears to drive apposition and subsequent fusion of viral and target cell membranes. Its function is as follows. Acts as a viral fusion peptide which is unmasked following S2 cleavage occurring upon virus endocytosis. The polypeptide is Spike glycoprotein (Porcine hemagglutinating encephalomyelitis virus (strain IAF-404) (HEV)).